A 160-amino-acid polypeptide reads, in one-letter code: Dihydrofolate reductase (160 aa).

The 158-residue stretch at 2-159 folds into the DHFR domain; that stretch reads TFSLIVATTL…YDCRFLILTR (158 aa). Ile-6 serves as a coordination point for substrate. Residues Ala-8 and 14 to 20 contribute to the NADP(+) site; that span reads VIGKDNQ. Asp-28 lines the substrate pocket. 46–47 provides a ligand contact to NADP(+); it reads KT. The substrate site is built by Arg-53 and Arg-58. NADP(+) is bound by residues 64 to 65 and 96 to 103; these read SR and GGGELFKQ. Thr-114 is a binding site for substrate.

The protein belongs to the dihydrofolate reductase family.

The enzyme catalyses (6S)-5,6,7,8-tetrahydrofolate + NADP(+) = 7,8-dihydrofolate + NADPH + H(+). Its pathway is cofactor biosynthesis; tetrahydrofolate biosynthesis; 5,6,7,8-tetrahydrofolate from 7,8-dihydrofolate: step 1/1. Key enzyme in folate metabolism. Catalyzes an essential reaction for de novo glycine and purine synthesis, and for DNA precursor synthesis. The sequence is that of Dihydrofolate reductase (folA) from Haemophilus influenzae (strain ATCC 51907 / DSM 11121 / KW20 / Rd).